The following is a 449-amino-acid chain: Glucose-6-phosphate isomerase (449 aa).

The active-site Proton donor is the Glu291. Active-site residues include His312 and Lys426.

This sequence belongs to the GPI family.

It is found in the cytoplasm. It catalyses the reaction alpha-D-glucose 6-phosphate = beta-D-fructose 6-phosphate. It functions in the pathway carbohydrate biosynthesis; gluconeogenesis. It participates in carbohydrate degradation; glycolysis; D-glyceraldehyde 3-phosphate and glycerone phosphate from D-glucose: step 2/4. Catalyzes the reversible isomerization of glucose-6-phosphate to fructose-6-phosphate. The chain is Glucose-6-phosphate isomerase from Streptococcus pyogenes serotype M5 (strain Manfredo).